The following is a 252-amino-acid chain: Metalloprotease LoiP (252 aa).

Residues 1-18 form the signal peptide; it reads MKIRALLVAMSVATVLTG. Cysteine 19 carries N-palmitoyl cysteine lipidation. Cysteine 19 carries the S-diacylglycerol cysteine lipid modification. A disulfide bridge connects residues cysteine 53 and cysteine 108. Position 130 (histidine 130) interacts with Zn(2+). Glutamate 131 is an active-site residue. The Zn(2+) site is built by histidine 134 and glutamate 189. Positions 224-252 are disordered; that stretch reads RQSSMFDDHPASAERAQHIRDRMSADGIK.

This sequence belongs to the peptidase M48B family. As to quaternary structure, interacts with Era and BepA. The cofactor is Zn(2+). The intramolecular disulfide bond improves the stability and the activity of LoiP. It forms even in the absence of the oxido-reductase DsbA.

It localises to the cell outer membrane. Its function is as follows. Metalloprotease that cleaves substrates preferentially between Phe-Phe residues. Plays a role in response to some stress conditions. Seems to regulate the expression of speB. In Escherichia coli (strain K12), this protein is Metalloprotease LoiP (loiP).